The sequence spans 370 residues: Queuine tRNA-ribosyltransferase (370 aa).

Aspartate 89 serves as the catalytic Proton acceptor. Substrate-binding positions include 89 to 93 (DSGGF), aspartate 143, and glycine 214. The segment at 245–251 (GVGKPED) is RNA binding. The active-site Nucleophile is the aspartate 264. The tract at residues 269–273 (TRNAR) is RNA binding; important for wobble base 34 recognition. Positions 302, 304, 307, and 333 each coordinate Zn(2+).

The protein belongs to the queuine tRNA-ribosyltransferase family. In terms of assembly, homodimer. Within each dimer, one monomer is responsible for RNA recognition and catalysis, while the other monomer binds to the replacement base PreQ1. Zn(2+) serves as cofactor.

It catalyses the reaction 7-aminomethyl-7-carbaguanine + guanosine(34) in tRNA = 7-aminomethyl-7-carbaguanosine(34) in tRNA + guanine. It participates in tRNA modification; tRNA-queuosine biosynthesis. Functionally, catalyzes the base-exchange of a guanine (G) residue with the queuine precursor 7-aminomethyl-7-deazaguanine (PreQ1) at position 34 (anticodon wobble position) in tRNAs with GU(N) anticodons (tRNA-Asp, -Asn, -His and -Tyr). Catalysis occurs through a double-displacement mechanism. The nucleophile active site attacks the C1' of nucleotide 34 to detach the guanine base from the RNA, forming a covalent enzyme-RNA intermediate. The proton acceptor active site deprotonates the incoming PreQ1, allowing a nucleophilic attack on the C1' of the ribose to form the product. After dissociation, two additional enzymatic reactions on the tRNA convert PreQ1 to queuine (Q), resulting in the hypermodified nucleoside queuosine (7-(((4,5-cis-dihydroxy-2-cyclopenten-1-yl)amino)methyl)-7-deazaguanosine). The protein is Queuine tRNA-ribosyltransferase of Buchnera aphidicola subsp. Acyrthosiphon pisum (strain 5A).